The sequence spans 601 residues: MKKIFITLLWLLFISSFLCSSSSAEDDVLCLQGLKNSLIDPSSRLSSWSFPNSSASSICKLTGVSCWNEKENRIISLQLQSMQLAGEIPESLKLCRSLQSLDLSGNDLSGSIPSQICSWLPYLVTLDLSGNKLGGSIPTQIVECKFLNALILSDNKLSGSIPSQLSRLDRLRRLSLAGNDLSGTIPSELARFGGDDFSGNNGLCGKPLSRCGALNGRNLSIIIVAGVLGAVGSLCVGLVIFWWFFIREGSRKKKGYGAGKSKDDSDWIGLLRSHKLVQVTLFQKPIVKIKLGDLMAATNNFSSGNIDVSSRTGVSYKADLPDGSALAVKRLSACGFGEKQFRSEMNKLGELRHPNLVPLLGYCVVEDERLLVYKHMVNGTLFSQLHNGGLCDAVLDWPTRRAIGVGAAKGLAWLHHGCQPPYLHQFISSNVILLDDDFDARITDYGLAKLVGSRDSNDSSFNNGDLGELGYVAPEYSSTMVASLKGDVYGFGIVLLELVTGQKPLSVINGVEGFKGSLVDWVSQYLGTGRSKDAIDRSICDKGHDEEILQFLKIACSCVVSRPKERPTMIQVYESLKNMADKHGVSEHYDEFPLVFNKQEA.

The first 24 residues, 1–24 (MKKIFITLLWLLFISSFLCSSSSA), serve as a signal peptide directing secretion. Asn52 carries N-linked (GlcNAc...) asparagine glycosylation. LRR repeat units follow at residues 73–95 (RIISLQLQSMQLAGEIPESLKLC), 97–119 (SLQSLDLSGNDLSGSIPSQICSW), 122–144 (YLVTLDLSGNKLGGSIPTQIVEC), 146–169 (FLNALILSDNKLSGSIPSQLSRLD), and 170–192 (RLRRLSLAGNDLSGTIPSELARF). A helical membrane pass occupies residues 221–241 (IIIVAGVLGAVGSLCVGLVIF). Thr298 is subject to Phosphothreonine. Residues 301-586 (FSSGNIDVSS…KNMADKHGVS (286 aa)) enclose the Protein kinase domain. Residues 307 to 315 (DVSSRTGVS) and Lys329 contribute to the ATP site. A Phosphoserine modification is found at Ser383. The residue at position 399 (Thr399) is a Phosphothreonine. Phosphotyrosine is present on Tyr476. Ser478 carries the phosphoserine modification. At Thr479 the chain carries Phosphothreonine. Phosphoserine occurs at positions 483 and 586.

Belongs to the protein kinase superfamily. Ser/Thr protein kinase family.

Its subcellular location is the membrane. This Arabidopsis thaliana (Mouse-ear cress) protein is Probable inactive receptor kinase At1g27190.